A 320-amino-acid polypeptide reads, in one-letter code: Olfactory receptor 7C1 (320 aa).

At 1–25 (METGNQTHAQEFLLLGFSATSEIQF) the chain is on the extracellular side. N-linked (GlcNAc...) asparagine glycosylation occurs at Asn-5. Residues 26–46 (ILFGLFLSMYLVTFTGNLLII) traverse the membrane as a helical segment. At 47-54 (LAICSDSH) the chain is on the cytoplasmic side. Residues 55 to 75 (LHTPMYFFLSNLSFADLCFTS) form a helical membrane-spanning segment. Topologically, residues 76–99 (TTVPKMLLNILTQNKFITYAGCLS) are extracellular. An intrachain disulfide couples Cys-97 to Cys-189. The chain crosses the membrane as a helical span at residues 100 to 120 (QIFFFTSFGCLDNLLLTVMAY). The Cytoplasmic portion of the chain corresponds to 121-139 (DRFVAVCHPLHYTVIMNPQ). A helical transmembrane segment spans residues 140-160 (LCGLLVLGSWCISVMGSLLET). Over 161 to 197 (LTVLRLSFCTEMEIPHFFCDLLEVLKLACSDTFINNV) the chain is Extracellular. Residues 198–217 (VIYFATGVLGVISFTGIFFS) form a helical membrane-spanning segment. Residues 218–237 (YYKIVFSILRISSAGRKHKA) lie on the Cytoplasmic side of the membrane. A helical transmembrane segment spans residues 238–258 (FSTCGSHLSVVTLFYGTGFGV). Residues 259 to 271 (YLSSAATPSSRTS) lie on the Extracellular side of the membrane. A helical membrane pass occupies residues 272 to 292 (LVASVMYTMVTPMLNPFIYSL). Residues 293–313 (RNTDMKRALGRLLSRATFFNG) are Cytoplasmic-facing.

This sequence belongs to the G-protein coupled receptor 1 family.

The protein resides in the cell membrane. In terms of biological role, odorant receptor. This is Olfactory receptor 7C1 (OR7C1) from Homo sapiens (Human).